The following is a 190-amino-acid chain: ATP synthase subunit delta (190 aa).

Belongs to the ATPase delta chain family. F-type ATPases have 2 components, F(1) - the catalytic core - and F(0) - the membrane proton channel. F(1) has five subunits: alpha(3), beta(3), gamma(1), delta(1), epsilon(1). F(0) has three main subunits: a(1), b(2) and c(10-14). The alpha and beta chains form an alternating ring which encloses part of the gamma chain. F(1) is attached to F(0) by a central stalk formed by the gamma and epsilon chains, while a peripheral stalk is formed by the delta and b chains.

The protein resides in the cell inner membrane. F(1)F(0) ATP synthase produces ATP from ADP in the presence of a proton or sodium gradient. F-type ATPases consist of two structural domains, F(1) containing the extramembraneous catalytic core and F(0) containing the membrane proton channel, linked together by a central stalk and a peripheral stalk. During catalysis, ATP synthesis in the catalytic domain of F(1) is coupled via a rotary mechanism of the central stalk subunits to proton translocation. Functionally, this protein is part of the stalk that links CF(0) to CF(1). It either transmits conformational changes from CF(0) to CF(1) or is implicated in proton conduction. The polypeptide is ATP synthase subunit delta (Methylobacterium nodulans (strain LMG 21967 / CNCM I-2342 / ORS 2060)).